The following is a 468-amino-acid chain: Asparagine--tRNA ligase (468 aa).

The protein belongs to the class-II aminoacyl-tRNA synthetase family. Homodimer.

It is found in the cytoplasm. The enzyme catalyses tRNA(Asn) + L-asparagine + ATP = L-asparaginyl-tRNA(Asn) + AMP + diphosphate + H(+). The polypeptide is Asparagine--tRNA ligase (Parabacteroides distasonis (strain ATCC 8503 / DSM 20701 / CIP 104284 / JCM 5825 / NCTC 11152)).